The chain runs to 620 residues: Membralin (620 aa).

The tract at residues 1 to 33 (MSEHVEPAAPGPGPNGGGGGPAPARGPRTPNLN) is disordered. Ser-2 bears the N-acetylserine mark. Over residues 22 to 31 (APARGPRTPN) the composition is skewed to low complexity. Position 29 is a phosphothreonine (Thr-29). Residues 70–90 (FFVLLKALFVLFVLAYIHIVF) traverse the membrane as a helical segment. N-linked (GlcNAc...) asparagine glycosylation is present at Asn-189. The next 3 helical transmembrane spans lie at 302 to 322 (TSYL…SMLL), 346 to 366 (IAFP…MEAI), and 426 to 446 (YSSL…IYFF). Disordered stretches follow at residues 474–517 (TPTA…GPVA) and 568–620 (SPLG…EVGS). 2 stretches are compositionally biased toward low complexity: residues 499–517 (PPAL…GPVA) and 568–593 (SPLG…AASD).

It belongs to the membralin family. As to quaternary structure, interacts with ERLIN2.

It is found in the endoplasmic reticulum membrane. In terms of biological role, may have a role in the ERAD pathway required for clearance of misfolded proteins in the endoplasmic reticulum (ER). Promotes survival of motor neurons, probably by protecting against ER stress. This is Membralin (TMEM259) from Homo sapiens (Human).